The primary structure comprises 103 residues: Cyclotide vibi-K (103 aa).

A signal peptide spans 1-9; the sequence is AAFALPAFA. The propeptide occupies 10–69; it reads SFEKDVITPSVLEAVLNRKAPLSNIMMENDAILNVIANVKTVISNPVLEEALLKTNHGVN. The segment at residues 70-99 is a cross-link (cyclopeptide (Gly-Asn)); the sequence is GIPCGESCVWIPCLTSAVGCPCKSKVCYRN. Cystine bridges form between cysteine 73–cysteine 89, cysteine 77–cysteine 91, and cysteine 82–cysteine 96. Residues 100–103 constitute a propeptide that is removed on maturation; the sequence is SLDN.

In terms of processing, this is a cyclic peptide.

Probably participates in a plant defense mechanism. The polypeptide is Cyclotide vibi-K (Viola biflora (Yellow wood violet)).